A 380-amino-acid chain; its full sequence is Endo-polygalacturonase (380 aa).

Positions 1 to 17 are cleaved as a signal peptide; it reads MVHILSSALSLLRLGAA. The propeptide occupies 18–42; that stretch reads VSAAPAPAPTAAPNVADALAAVEKR. Cys-46 and Cys-64 are disulfide-bonded. PbH1 repeat units lie at residues 178–207, 208–229, 230–250, 259–280, 288–310, and 322–343; these read ASGL…DVGS, STDI…AINS, GTGI…SIGS, VSDV…RIKT, VSGV…VIEQ, and TSGV…SSSA. Residue Asp-222 is the Proton donor of the active site. A disulfide bridge connects residues Cys-224 and Cys-240. Residue His-244 is part of the active site. Cys-350 and Cys-353 are disulfide-bonded. Asn-361 carries N-linked (GlcNAc...) asparagine glycosylation. Residues Cys-371 and Cys-380 are joined by a disulfide bond.

This sequence belongs to the glycosyl hydrolase 28 family.

It is found in the secreted. The enzyme catalyses (1,4-alpha-D-galacturonosyl)n+m + H2O = (1,4-alpha-D-galacturonosyl)n + (1,4-alpha-D-galacturonosyl)m.. The polypeptide is Endo-polygalacturonase (PG1) (Sclerotinia sclerotiorum (White mold)).